Here is a 453-residue protein sequence, read N- to C-terminus: Phosphomannomutase (453 aa).

S96 serves as the catalytic Phosphoserine intermediate. Positions 96, 243, 245, and 247 each coordinate Mg(2+).

The protein belongs to the phosphohexose mutase family. The cofactor is Mg(2+).

The catalysed reaction is alpha-D-mannose 1-phosphate = D-mannose 6-phosphate. Its pathway is nucleotide-sugar biosynthesis; GDP-alpha-D-mannose biosynthesis; alpha-D-mannose 1-phosphate from D-fructose 6-phosphate: step 2/2. The protein operates within bacterial outer membrane biogenesis; LPS O-antigen biosynthesis. Involved in GDP-mannose biosynthesis which serves as the activated sugar nucleotide precursor for mannose residues in cell surface polysaccharides. This enzyme participates in synthesis of the LPS O7 antigen. The sequence is that of Phosphomannomutase (manB) from Escherichia coli.